Consider the following 626-residue polypeptide: Putative folylpolyglutamate synthase (626 aa).

144–147 serves as a coordination point for ATP; it reads GKGS. Residues Ser-168, Glu-235, and His-263 each contribute to the Mg(2+) site. Residues Arg-412 and Asp-430 each coordinate ATP.

It belongs to the folylpolyglutamate synthase family.

The enzyme catalyses (6S)-5,6,7,8-tetrahydrofolyl-(gamma-L-Glu)(n) + L-glutamate + ATP = (6S)-5,6,7,8-tetrahydrofolyl-(gamma-L-Glu)(n+1) + ADP + phosphate + H(+). It functions in the pathway cofactor biosynthesis; tetrahydrofolylpolyglutamate biosynthesis. Conversion of folates to polyglutamate derivatives. This chain is Putative folylpolyglutamate synthase (folC), found in Dictyostelium discoideum (Social amoeba).